Here is a 163-residue protein sequence, read N- to C-terminus: MADLYALTQQALAGMDVELVDVERAALGLLRVTIDKAGGVRIEDCEQVSRQLSRVYEVENIDYKRLEVGSPGVDRPLRTEAELRRFAGERIEIKLRQPLDGRKVFSGILSAPANDGAAADAQPAVFGLEFEAKKDDIQVLNFTLGDVERAKLDPVLDFKGKKR.

Belongs to the RimP family.

The protein resides in the cytoplasm. Functionally, required for maturation of 30S ribosomal subunits. The polypeptide is Ribosome maturation factor RimP (Bordetella petrii (strain ATCC BAA-461 / DSM 12804 / CCUG 43448)).